The following is a 468-amino-acid chain: Two-component response regulator-like APRR9 (468 aa).

One can recognise a Response regulatory domain in the interval 38 to 156 (RVLLVESDYS…ELKNLWQHVW (119 aa)). Polar residues-rich tracts occupy residues 168-177 (HAQSLPASQH) and 194-203 (DQGSGAQAIN). Disordered stretches follow at residues 168–203 (HAQS…QAIN), 302–416 (VVAL…SRSQ), and 442–468 (RKKL…STKS). Positions 315-327 (TPTESHEKLRKVT) are enriched in basic and acidic residues. Polar residues predominate over residues 328-364 (SDQGSATTSSNQENIGSSSVSFRNQVLQSTVTNQKQD). Basic and acidic residues-rich tracts occupy residues 371–382 (SNREKAASKEVE) and 400–409 (EKPKEEESAK). A CCT domain is found at 417 to 459 (REAALMKFRLKRKDRCFDKKVRYQSRKKLAEQRPRVKGQFVRT). Residues 458-468 (RTVNSDASTKS) show a composition bias toward polar residues.

This sequence belongs to the ARR-like family. In terms of processing, phosphorylated. Phosphorylation varies throughout the diurnal cycle.

It localises to the nucleus. Its function is as follows. Transcriptional repressor of CCA1 and LHY, and positive regulator of LWD1 and LWD2 expression. Controls photoperiodic flowering response and temperature compensation. Involved in the positive and negative feedback loops of the circadian clock. Expression of several members of the ARR-like family is controlled by circadian rhythm. Regulated at the transcriptional level by a corepressor complex consisting of ELF4, ELF3, and LUX. APRR9, APRR7, and APRR5 coordinately act on the upstream region of the target genes to repress their expression from noon until midnight. The particular coordinated sequential expression of APRR9, APRR7, APRR5, APRR3 and APPR1 result to circadian waves that may be at the basis of the endogenous circadian clock. This is Two-component response regulator-like APRR9 (APRR9) from Arabidopsis thaliana (Mouse-ear cress).